The chain runs to 408 residues: Echinulin prenyltransferase 2 (408 aa).

Residues R94, K181, Y183, R248, K250, Y252, Q334, Y336, Y400, and Y404 each contribute to the dimethylallyl diphosphate site.

The protein belongs to the tryptophan dimethylallyltransferase family.

It catalyses the reaction preechinulin + dimethylallyl diphosphate = tardioxopiperazine B + diphosphate. The catalysed reaction is preechinulin + dimethylallyl diphosphate = tardioxopiperazine A + diphosphate. It carries out the reaction tardioxopiperazine A + dimethylallyl diphosphate = echinulin + diphosphate. The enzyme catalyses tardioxopiperazine A + dimethylallyl diphosphate = variecolorin L + diphosphate. It catalyses the reaction neoechinulin A + dimethylallyl diphosphate = variecolorin G + diphosphate. The catalysed reaction is neoechinulin A + dimethylallyl diphosphate = isoechinulin A + diphosphate. It carries out the reaction isoechinulin A + dimethylallyl diphosphate = dehydroechinulin + diphosphate. The enzyme catalyses neoechinulin B + dimethylallyl diphosphate = isoechinulin B + diphosphate. The protein operates within secondary metabolite biosynthesis. Its pathway is alkaloid biosynthesis. Prenyltransferase; part of the gene cluster that mediates the biosynthesis of echinulin family alkaloid. The pathway begins with the biosynthesis of the cyclic dipeptide cyclo-L-Trp-L-Ala (cyclo-TA) by the NRPS echPS via condensation of L-alanine and L-tryptophan. The prenyltransferase echPT1 then catalyzes the first prenylation step, a reverse prenylation reaction at C2, to yield preechinulin. Preechinulin is the substrate of the cytochrome P450 monooxygenase echP450 that catalyzes the formation of the double bond between C10 and C11 to produce neoechulin A. The unique prenyltransferase echPT2 functions as a competitive enzyme with echP450 for preechinulin metabolization and uses preechinulin for effective regiospecific prenylations. Preechinulin is prenylated by echPT2 at C5 or C7. C7-prenylation leads to accumulation of tardioxopiperazine B without further modification by echPT2. In contrast, the C5-prenylated tardioxopiperazine A can be prenylated again by echPT2, predominantly at C7 to form echinulin or less frequently at C4 to give variecolorin L. EchPT2 also accepts neoechilunin A to produce varlecolorin G (prenylation at C5) or isoechinulin A (prenylation at C7). EchPT2 further converts isoechinulin A into dehydroechinulin. Moreover, a yet unidentified enzyme can also convert neoechilunin A into neoechilunin B by introducing a double bond between positions C14 and C17 and thus provides a further substrate to echPT2 for C5 and C7 prenylation. This Aspergillus ruber (Eurotium rubrum) protein is Echinulin prenyltransferase 2.